A 117-amino-acid polypeptide reads, in one-letter code: Large ribosomal subunit protein bL19 (117 aa).

It belongs to the bacterial ribosomal protein bL19 family.

Its function is as follows. This protein is located at the 30S-50S ribosomal subunit interface and may play a role in the structure and function of the aminoacyl-tRNA binding site. The sequence is that of Large ribosomal subunit protein bL19 from Mycoplasmopsis pulmonis (strain UAB CTIP) (Mycoplasma pulmonis).